A 222-amino-acid chain; its full sequence is Phosphoenolpyruvate guanylyltransferase (222 aa).

The phosphoenolpyruvate site is built by Thr147, Gly163, and Ser166.

The protein belongs to the CofC family.

The enzyme catalyses phosphoenolpyruvate + GTP + H(+) = enolpyruvoyl-2-diphospho-5'-guanosine + diphosphate. It functions in the pathway cofactor biosynthesis; coenzyme F420 biosynthesis. Its function is as follows. Guanylyltransferase that catalyzes the activation of phosphoenolpyruvate (PEP) as enolpyruvoyl-2-diphospho-5'-guanosine, via the condensation of PEP with GTP. It is involved in the biosynthesis of coenzyme F420, a hydride carrier cofactor. The sequence is that of Phosphoenolpyruvate guanylyltransferase from Streptosporangium roseum (strain ATCC 12428 / DSM 43021 / JCM 3005 / KCTC 9067 / NCIMB 10171 / NRRL 2505 / NI 9100).